A 534-amino-acid chain; its full sequence is Nitrate/nitrite transporter NrtP (534 aa).

A run of 12 helical transmembrane segments spans residues 19–39 (WFAFFLSFVVWFNFPPFATTI), 52–72 (TIGLCNVALTVPARIIIGMLL), 79–99 (LTYSLLLIYAAVPCLIFATAQ), 109–129 (LLMGIVGAGFVIGIRMVAEWF), 150–170 (AFSAFTMVIFGIILAFLPGAF), 195–215 (AAIAGTGIIAALYGMLYYFSV), 240–260 (DFWFLLAMNLPLTLILMVLAW), 266–286 (NFLNGTGFAIAILALVGLYLF), 382–404 (WTMVVLTVGMGVGYLLMSSVAGT), 409–431 (IAVLLTMACSFFVQAAEGSTFAI), 445–465 (GNVGAYGNVGAVAYLTVLLLL), and 485–505 (GFFQVLGITGLIVAFLCAFFL).

It belongs to the major facilitator superfamily. Nitrate/nitrite porter (TC 2.A.1.8) family.

The protein localises to the cell inner membrane. Its function is as follows. High-efficiency transport system for both nitrate and nitrite. The polypeptide is Nitrate/nitrite transporter NrtP (Picosynechococcus sp. (strain ATCC 27264 / PCC 7002 / PR-6) (Agmenellum quadruplicatum)).